Here is an 804-residue protein sequence, read N- to C-terminus: Zinc finger protein YGR067C (804 aa).

C2H2-type zinc fingers lie at residues 8-30 (YICS…ERSH) and 36-59 (FQCQ…RTVH). Residues 782-796 (QEFSASSTDNKQSKN) show a composition bias toward polar residues. The disordered stretch occupies residues 782–804 (QEFSASSTDNKQSKNIEIFSQIK).

It localises to the nucleus. The protein is Zinc finger protein YGR067C of Saccharomyces cerevisiae (strain ATCC 204508 / S288c) (Baker's yeast).